A 515-amino-acid polypeptide reads, in one-letter code: Low affinity ammonium transporter (515 aa).

The Extracellular portion of the chain corresponds to 1–78; that stretch reads MSTSSSVTQK…IIGNSFGTTN (78 aa). A helical membrane pass occupies residues 79-99; it reads AGQLSWFASAYSLTVGTFILI. At 100–111 the chain is on the cytoplasmic side; it reads AGRLGDIFGHKK. Residues 112-132 traverse the membrane as a helical segment; that stretch reads FFVLGFFWYALWSLLAGFSVY. Over 133–140 the chain is Extracellular; the sequence is SNQIFFDC. The chain crosses the membrane as a helical span at residues 141–161; sequence CRAFQGMGPAFLLPNAIAILG. Residues 162–171 are Cytoplasmic-facing; sequence RTYKPGRRKN. A helical membrane pass occupies residues 172 to 192; sequence MVFSLFGASAPGGFFLGAVFS. Residues 193 to 202 are Extracellular-facing; it reads SMLGQLAWWP. The helical transmembrane segment at 203-223 threads the bilayer; the sequence is WAYWIMGIACFVLAVAGYFVI. At 224–241 the chain is on the cytoplasmic side; the sequence is PHTPMPSRDASSFKLLER. Residues 242–262 traverse the membrane as a helical segment; sequence IDFAGSVTGVVGLILFNFAWN. Topologically, residues 263 to 270 are extracellular; it reads QGPVVGWQ. A helical membrane pass occupies residues 271-291; that stretch reads TPYTYALLIVGTFFLVIFAYI. The Cytoplasmic portion of the chain corresponds to 292 to 310; sequence ESRAAFPLLPFAALSSDTA. The helical transmembrane segment at 311 to 331 threads the bilayer; the sequence is FVLSCIAAGWASFGIWIFYTW. At 332 to 346 the chain is on the extracellular side; the sequence is QFMEDSRGQTPLLSS. The chain crosses the membrane as a helical span at residues 347–367; the sequence is AQFSPVAISGFCAAVTTGFLL. At 368–374 the chain is on the cytoplasmic side; sequence SHTPPST. A helical membrane pass occupies residues 375–395; sequence VMLFAMTAFTVGTILIATAPV. Residues 396–403 are Extracellular-facing; it reads HQTYWAQT. A helical transmembrane segment spans residues 404–424; that stretch reads FVSIIVMPWGMDMSFPAATIM. Residues 425–435 are Cytoplasmic-facing; the sequence is LSDSMPHEHQG. A helical membrane pass occupies residues 436–456; that stretch reads LAASLVNTVVNYSISIGLGIA. Topologically, residues 457-479 are extracellular; that stretch reads GTIESRVNDGGAKPLKGYRCSWY. The chain crosses the membrane as a helical span at residues 480–500; sequence MGIGLSGLGIFVAATYAWSTF. Residues 501–515 lie on the Cytoplasmic side of the membrane; sequence MKSKKRISEKQHFIE.

It belongs to the major facilitator superfamily.

The protein localises to the cell membrane. Low affinity ammonium transporter of the plasma membrane. May be involved in drug resistance through pumping them out of the cell. The sequence is that of Low affinity ammonium transporter from Saccharomyces cerevisiae (strain ATCC 204508 / S288c) (Baker's yeast).